A 36-amino-acid chain; its full sequence is uncharacterized protein (36 aa).

Over residues 1 to 14 (MNQLGSGPTKQGVA) the composition is skewed to polar residues. The segment at 1–36 (MNQLGSGPTKQGVATNTGSTGTTKNNSNLSGKGWVL) is disordered. Low complexity predominate over residues 15-36 (TNTGSTGTTKNNSNLSGKGWVL).

This is an uncharacterized protein from Dictyostelium discoideum (Social amoeba).